Consider the following 1070-residue polypeptide: DNA-directed RNA polymerase subunit beta (1070 aa).

It belongs to the RNA polymerase beta chain family. In plastids the minimal PEP RNA polymerase catalytic core is composed of four subunits: alpha, beta, beta', and beta''. When a (nuclear-encoded) sigma factor is associated with the core the holoenzyme is formed, which can initiate transcription.

It localises to the plastid. The protein resides in the chloroplast. The enzyme catalyses RNA(n) + a ribonucleoside 5'-triphosphate = RNA(n+1) + diphosphate. Its function is as follows. DNA-dependent RNA polymerase catalyzes the transcription of DNA into RNA using the four ribonucleoside triphosphates as substrates. The sequence is that of DNA-directed RNA polymerase subunit beta from Solanum bulbocastanum (Wild potato).